A 638-amino-acid polypeptide reads, in one-letter code: MIDSTRYPRLSRIQTPDDLRTFEEADLTAVADELRAYLIESVGKSGGHFAAGLGVIELTVALHYLYQTPVDQLVWDVGHQTYPHKILTGRRDQIHTVKQKDGVAPFPKREESVYDTFGVGHSSTSISAALGMAIAAQRNGDDRKVVAVIGDGAMTAGMVYEALNHAGGMDPEPNLLVILNDNRMSISEAVGGLTKMLGRASGSRTLNAIREGGKKILGDKKNNPTARFVRRWEEHWKGMFVPSTLFEEMGFHYTGPIDGHDLPSLVGALKTLKTLKGPQLLHVITTKGKGYELAEGDQIGYHAVGPFDPSKGLVAKAGAKKPTYTDVFSDWVCDMAAADPKMLVITPAMREGSGLVRFSKEYPQRYFDVAIAEQHAVTLAAGMATQGAKPVVAIYSTFLQRGYDQLVHDVAVQKLDVLFAIDRGGVVGPDGATHAGNLDLSFLRCVPHMVVMAPADEAECRQMLTTGLRYEGPAAVRYPRGTGPGTALDAALTTLPIGKAQLRHSGARIALLGFGATVDAAEAVGRELGLTVVNMRFVKPLDKAMLLELAKCHEAFVSIEDNVVAGGAGSGVSELLNAEGVLMPMLHLGLPDSFQHHASREDLLAEAGIDQAGIRAAVLKRWPQLMAKGQQALNAAAG.

Residues H79 and 120–122 contribute to the thiamine diphosphate site; that span reads GHS. A Mg(2+)-binding site is contributed by D151. Thiamine diphosphate is bound by residues 152–153, N182, Y291, and E373; that span reads GA. N182 is a Mg(2+) binding site.

It belongs to the transketolase family. DXPS subfamily. Homodimer. Mg(2+) is required as a cofactor. Requires thiamine diphosphate as cofactor.

It catalyses the reaction D-glyceraldehyde 3-phosphate + pyruvate + H(+) = 1-deoxy-D-xylulose 5-phosphate + CO2. Its pathway is metabolic intermediate biosynthesis; 1-deoxy-D-xylulose 5-phosphate biosynthesis; 1-deoxy-D-xylulose 5-phosphate from D-glyceraldehyde 3-phosphate and pyruvate: step 1/1. Functionally, catalyzes the acyloin condensation reaction between C atoms 2 and 3 of pyruvate and glyceraldehyde 3-phosphate to yield 1-deoxy-D-xylulose-5-phosphate (DXP). The polypeptide is 1-deoxy-D-xylulose-5-phosphate synthase (Xanthomonas campestris pv. campestris (strain 8004)).